A 214-amino-acid polypeptide reads, in one-letter code: Adenylate kinase (214 aa).

Residue 10–15 (GAGKGT) coordinates ATP. Residues 30 to 59 (STGDMLRAAVKAGTPLGLEAKKVMDAGQLV) are NMP. AMP is bound by residues threonine 31, arginine 36, 57–59 (QLV), 85–88 (GFPR), and glutamine 92. The tract at residues 122–159 (GRRVHPGSGRVYHIVFNQPKVEGKDDVTGEDLAIRPDD) is LID. ATP is bound by residues arginine 123 and 132–133 (VY). Residues arginine 156 and arginine 167 each coordinate AMP. Glutamine 200 contributes to the ATP binding site.

This sequence belongs to the adenylate kinase family. As to quaternary structure, monomer.

The protein resides in the cytoplasm. The enzyme catalyses AMP + ATP = 2 ADP. The protein operates within purine metabolism; AMP biosynthesis via salvage pathway; AMP from ADP: step 1/1. Functionally, catalyzes the reversible transfer of the terminal phosphate group between ATP and AMP. Plays an important role in cellular energy homeostasis and in adenine nucleotide metabolism. This Shewanella woodyi (strain ATCC 51908 / MS32) protein is Adenylate kinase.